The sequence spans 390 residues: 23S rRNA (uracil(747)-C(5))-methyltransferase RlmC (390 aa).

C12, C20, C23, and C100 together coordinate [4Fe-4S] cluster. 4 residues coordinate S-adenosyl-L-methionine: Q225, F254, E275, and N322. C349 (nucleophile) is an active-site residue.

Belongs to the class I-like SAM-binding methyltransferase superfamily. RNA M5U methyltransferase family. RlmC subfamily.

It carries out the reaction uridine(747) in 23S rRNA + S-adenosyl-L-methionine = 5-methyluridine(747) in 23S rRNA + S-adenosyl-L-homocysteine + H(+). Its function is as follows. Catalyzes the formation of 5-methyl-uridine at position 747 (m5U747) in 23S rRNA. The protein is 23S rRNA (uracil(747)-C(5))-methyltransferase RlmC of Shewanella baltica (strain OS223).